A 3206-amino-acid polypeptide reads, in one-letter code: Highly reducing polyketide synthase ltbA (3206 aa).

A Ketosynthase family 3 (KS3) domain is found at 5 to 434 (PAPIAIIGVG…GTNCHVILEA (430 aa)). Residues cysteine 179, histidine 314, and histidine 354 each act as for beta-ketoacyl synthase activity in the active site. The segment covering 441-463 (PTGTNGIKTNGTRINGIKTNGAD) has biased composition (polar residues). Residues 441 to 472 (PTGTNGIKTNGTRINGIKTNGADTNERESMKN) are disordered. The tract at residues 575-890 (VFSGQGAQWH…EYLSALQRNT (316 aa)) is malonyl-CoA:ACP transacylase (MAT) domain. The N-terminal hotdog fold stretch occupies residues 958 to 1098 (HDLLGLFDPA…GEITVEYETD (141 aa)). The dehydratase (DH) domain stretch occupies residues 958–1278 (HDLLGLFDPA…LLVNLRAIGE (321 aa)). One can recognise a PKS/mFAS DH domain in the interval 958 to 1284 (HDLLGLFDPA…AIGETREDED (327 aa)). Histidine 990 serves as the catalytic Proton acceptor; for dehydratase activity. The interval 1128–1284 (DTDMTKSEFY…AIGETREDED (157 aa)) is C-terminal hotdog fold. Residue aspartate 1193 is the Proton donor; for dehydratase activity of the active site. Residues 1450–1640 (ESGILVGPYE…LARNGFGGIH (191 aa)) form a methyltransferase (CMet) domain region. The enoyl reductase (ER) domain stretch occupies residues 1871-2185 (LLSSLRFVDD…RKHTGKVVLQ (315 aa)). Positions 2208-2395 (GTYVAAGGLG…SVDAHGALKE (188 aa)) are ketoreductase (KR) domain. One can recognise a Carrier domain in the interval 2499–2577 (EEAEQLIRDA…ALAATVASRS (79 aa)). Residue serine 2537 is modified to O-(pantetheine 4'-phosphoryl)serine. The segment at 2584 to 2611 (IRHSSRLQEATTQAENKDAPKNEKEGPS) is disordered. Over residues 2598–2610 (ENKDAPKNEKEGP) the composition is skewed to basic and acidic residues. Residues 2994–3206 (HLIPSFGKAV…IKTIIQAGQE (213 aa)) form a carnitine O-acyltransferase (cAT) domain region.

It depends on pantetheine 4'-phosphate as a cofactor.

It participates in secondary metabolite biosynthesis. Its function is as follows. Highly reducing polyketide synthase; part of the gene cluster that mediates the biosynthesis of luteodienoside A, a glycosylated polyketide consisting of an unusual 1-O-beta-D-glucopyranosyl-myo-inositol (glucinol) ester of 3-hydroxy-2,2,4-trimethylocta-4,6-dienoic acid. LtbA produces the trimethylated polyketide chain from acetyl-CoA, malonyl-CoA and S-adenosylmethionine (SAM). The ltbA carnitine O-acyltransferase (cAT) domain then uses glucinol produced by the glycosyltransferase ltbB as an offloading substrate to release luteodienoside A. Furthermore, the PKS C-methyltransferase (CMeT) domain is capable of catalysing gem-dimethylation of the 3-hydroxy-2,2,4-trimethylocta-4,6-dienoic acid intermediate, without requiring reversible product release and recapture by the cAT domain. Since ltbA and ltbB are sufficient for the biosynthesis of luteodienoside A, the functions of the methyltransferase ltbC and the FAD-binding monooxygenase ltbD within the pathway remain obscur. The polypeptide is Highly reducing polyketide synthase ltbA (Aspergillus luteorubrus).